Reading from the N-terminus, the 178-residue chain is Cytidylate kinase (178 aa).

7-15 (GLPGTGTTT) provides a ligand contact to ATP.

Belongs to the cytidylate kinase family. Type 2 subfamily.

It is found in the cytoplasm. It catalyses the reaction CMP + ATP = CDP + ADP. The catalysed reaction is dCMP + ATP = dCDP + ADP. This Methanococcus maripaludis (strain C7 / ATCC BAA-1331) protein is Cytidylate kinase.